The sequence spans 279 residues: NADPH-dependent 7-cyano-7-deazaguanine reductase (279 aa).

86–88 (IES) is a binding site for substrate. 88–89 (SK) is a binding site for NADPH. The Thioimide intermediate role is filled by C187. The Proton donor role is filled by D194. Residue 226–227 (HE) coordinates substrate. NADPH is bound at residue 255-256 (RG).

Belongs to the GTP cyclohydrolase I family. QueF type 2 subfamily. Homodimer.

Its subcellular location is the cytoplasm. It catalyses the reaction 7-aminomethyl-7-carbaguanine + 2 NADP(+) = 7-cyano-7-deazaguanine + 2 NADPH + 3 H(+). It participates in tRNA modification; tRNA-queuosine biosynthesis. Catalyzes the NADPH-dependent reduction of 7-cyano-7-deazaguanine (preQ0) to 7-aminomethyl-7-deazaguanine (preQ1). The chain is NADPH-dependent 7-cyano-7-deazaguanine reductase from Haemophilus influenzae (strain ATCC 51907 / DSM 11121 / KW20 / Rd).